Consider the following 442-residue polypeptide: tRNA(Ile)-lysidine synthase (442 aa).

Residue 30–35 (SGGLDS) participates in ATP binding.

Belongs to the tRNA(Ile)-lysidine synthase family.

It localises to the cytoplasm. It catalyses the reaction cytidine(34) in tRNA(Ile2) + L-lysine + ATP = lysidine(34) in tRNA(Ile2) + AMP + diphosphate + H(+). In terms of biological role, ligates lysine onto the cytidine present at position 34 of the AUA codon-specific tRNA(Ile) that contains the anticodon CAU, in an ATP-dependent manner. Cytidine is converted to lysidine, thus changing the amino acid specificity of the tRNA from methionine to isoleucine. The chain is tRNA(Ile)-lysidine synthase from Pseudomonas fluorescens (strain Pf0-1).